We begin with the raw amino-acid sequence, 450 residues long: Serine/threonine-protein kinase-transforming protein Rmil (450 aa).

Basic and acidic residues-rich tracts occupy residues 1-14 (MEAV…DQGV) and 49-73 (QRER…RDSS). Residues 1–80 (MEAVIKDLIR…DSSDDWEIPD (80 aa)) are disordered. The 261-residue stretch at 83–343 (ITVGQRIGSG…PQILASIELL (261 aa)) folds into the Protein kinase domain. ATP contacts are provided by residues 89–97 (IGSGSFGTV) and K109. D202 acts as the Proton acceptor in catalysis.

It belongs to the protein kinase superfamily. TKL Ser/Thr protein kinase family. RAF subfamily.

It catalyses the reaction L-seryl-[protein] + ATP = O-phospho-L-seryl-[protein] + ADP + H(+). It carries out the reaction L-threonyl-[protein] + ATP = O-phospho-L-threonyl-[protein] + ADP + H(+). This Avian rous-associated virus type 1 protein is Serine/threonine-protein kinase-transforming protein Rmil (V-RMIL).